We begin with the raw amino-acid sequence, 318 residues long: Carbamate kinase (318 aa).

Belongs to the carbamate kinase family.

The protein localises to the cytoplasm. It carries out the reaction hydrogencarbonate + NH4(+) + ATP = carbamoyl phosphate + ADP + H2O + H(+). It functions in the pathway metabolic intermediate metabolism; carbamoyl phosphate degradation; CO(2) and NH(3) from carbamoyl phosphate: step 1/1. The sequence is that of Carbamate kinase (arcC) from Lentilactobacillus hilgardii (Lactobacillus hilgardii).